Here is a 303-residue protein sequence, read N- to C-terminus: uncharacterized protein (303 aa).

The next 4 helical transmembrane spans lie at 102–122 (TYLL…VMAI), 132–152 (FVLF…FLFF), 184–204 (LLYF…SLIY), and 221–241 (FILL…FLLF).

It localises to the membrane. This is an uncharacterized protein from Dictyostelium discoideum (Social amoeba).